The chain runs to 423 residues: D-tagatose-1,6-bisphosphate aldolase subunit GatZ (423 aa).

The protein belongs to the GatZ/KbaZ family. GatZ subfamily. As to quaternary structure, forms a complex with GatY.

It participates in carbohydrate metabolism; D-tagatose 6-phosphate degradation; D-glyceraldehyde 3-phosphate and glycerone phosphate from D-tagatose 6-phosphate: step 2/2. In terms of biological role, component of the tagatose-1,6-bisphosphate aldolase GatYZ that is required for full activity and stability of the Y subunit. Could have a chaperone-like function for the proper and stable folding of GatY. When expressed alone, GatZ does not show any aldolase activity. Is involved in the catabolism of galactitol. This chain is D-tagatose-1,6-bisphosphate aldolase subunit GatZ, found in Salmonella heidelberg (strain SL476).